The following is a 208-amino-acid chain: N-(5'-phosphoribosyl)anthranilate isomerase (208 aa).

The protein belongs to the TrpF family.

It carries out the reaction N-(5-phospho-beta-D-ribosyl)anthranilate = 1-(2-carboxyphenylamino)-1-deoxy-D-ribulose 5-phosphate. The protein operates within amino-acid biosynthesis; L-tryptophan biosynthesis; L-tryptophan from chorismate: step 3/5. This chain is N-(5'-phosphoribosyl)anthranilate isomerase, found in Pyrococcus furiosus (strain ATCC 43587 / DSM 3638 / JCM 8422 / Vc1).